Consider the following 513-residue polypeptide: Coiled-coil domain-containing protein 102B (513 aa).

Residues 1–217 (MNLDSIHRLI…IDSLKLSEEM (217 aa)) are required for centriolar localization and for interaction with CEP250, CROCC, LRRC45 and NEK2. Phosphoserine occurs at positions 21, 22, 34, 135, 142, 194, and 210. Positions 72–142 (ELRLRELEEV…ELSTLKKKQS (71 aa)) form a coiled coil. Coiled coils occupy residues 268-337 (QKIL…ESKS) and 363-513 (WDKR…LQNW). A phosphoserine mark is found at serine 401, serine 404, and serine 406. Positions 493-513 (LDEEKERNENLETELRHLQNW) are disordered.

In terms of assembly, interacts (via N-terminus) with centriolar protein CEP250/CNAP1; the interaction results in recruitment of CCDC102B to the proximal ends of centrioles. Interacts (via N-terminus) with CROCC/rootletin and LRRC45. Interacts (via N-terminus) with serine/threonine-protein kinase NEK2; the interaction results in phosphorylation of CCDC102B. In terms of processing, phosphorylated directly or indirectly by NEK2 during mitosis which causes dissociation of CCDC102B from the centrosome and allows for centrosome separation.

The protein localises to the cytoplasm. It localises to the cytoskeleton. The protein resides in the microtubule organizing center. It is found in the centrosome. Its subcellular location is the centriole. During interphase, forms fibers at the proximal ends of centrioles to maintain centrosome cohesion. During mitosis, dissociates from the centrosome following phosphorylation to allow centrosome separation. Contributes to CROCC/rootletin filament formation. The sequence is that of Coiled-coil domain-containing protein 102B (CCDC102B) from Homo sapiens (Human).